Consider the following 520-residue polypeptide: Succinyl-CoA:3-ketoacid coenzyme A transferase 2A, mitochondrial (520 aa).

The transit peptide at 1-39 directs the protein to the mitochondrion; that stretch reads MAALRLLAWALPRGVSALRPPPALPHRLIRRYVSDRSGS. The segment at 280-299 is disordered; the sequence is ERLTTRDSKPAPGSKDNDPS. Catalysis depends on Glu-342, which acts as the 5-glutamyl coenzyme A thioester intermediate.

Belongs to the 3-oxoacid CoA-transferase family. In terms of assembly, homodimer.

It localises to the mitochondrion. It carries out the reaction a 3-oxo acid + succinyl-CoA = a 3-oxoacyl-CoA + succinate. It functions in the pathway ketone metabolism; succinyl-CoA degradation; acetoacetyl-CoA from succinyl-CoA: step 1/1. In terms of biological role, key enzyme for ketone body catabolism. Transfers the CoA moiety from succinate to acetoacetate. Formation of the enzyme-CoA intermediate proceeds via an unstable anhydride species formed between the carboxylate groups of the enzyme and substrate. Probably play and important roles in the energy metabolism of spermatozoa. The sequence is that of Succinyl-CoA:3-ketoacid coenzyme A transferase 2A, mitochondrial (Oxct2a) from Mus musculus (Mouse).